A 1083-amino-acid chain; its full sequence is Ubiquitin-protein ligase E3C (1083 aa).

Basic and acidic residues-rich tracts occupy residues 1–10 (MFSFEGDFKT) and 20–40 (SRKE…RKRE). Residues 1–40 (MFSFEGDFKTRPKVSLGGASRKEEKASLLHRTQEERRKRE) form a disordered region. The cis-determinant of acceptor ubiquitin-binding stretch occupies residues 1–60 (MFSFEGDFKTRPKVSLGGASRKEEKASLLHRTQEERRKREEERRRLKNAIIIQSFIRGYR). Residues 45–74 (RLKNAIIIQSFIRGYRDRKQQYSIQRSAFD) form the IQ domain. The disordered stretch occupies residues 355-385 (SPASASCHDSASDSEEESEEADKPSSPEDGR). Residues 375–385 (ADKPSSPEDGR) are compositionally biased toward basic and acidic residues. One can recognise an HECT domain in the interval 744–1083 (NEPDLKKRIR…IECAAGFELS (340 aa)). Residue K903 forms a Glycyl lysine isopeptide (Lys-Gly) (interchain with G-Cter in ubiquitin); by autocatalysis linkage. C1051 acts as the Glycyl thioester intermediate in catalysis.

The protein belongs to the UBE3C family. As to quaternary structure, interacts with 26S proteasomes. Interacts (via the HECT domain) with UBE2D1 and, less efficiently, with UBE2L3. In terms of processing, autoubiquitinated; promoting its own degradation. In terms of tissue distribution, highly expressed in skeletal muscle. Detected at much lower levels in kidney and pancreas.

It carries out the reaction S-ubiquitinyl-[E2 ubiquitin-conjugating enzyme]-L-cysteine + [acceptor protein]-L-lysine = [E2 ubiquitin-conjugating enzyme]-L-cysteine + N(6)-ubiquitinyl-[acceptor protein]-L-lysine.. Its pathway is protein modification; protein ubiquitination. In terms of biological role, E3 ubiquitin-protein ligase that specifically catalyzes 'Lys-29'- and 'Lys-48'-linked polyubiquitin chains. Accepts ubiquitin from the E2 ubiquitin-conjugating enzyme UBE2D1 in the form of a thioester and then directly transfers the ubiquitin to targeted substrates. Associates with the proteasome and promotes elongation of ubiquitin chains on substrates bound to the 26S proteasome. Also catalyzes 'Lys-29'- and 'Lys-48'-linked ubiquitination of 26S proteasome subunit ADRM1/RPN13 in response to proteotoxic stress, impairing the ability of the proteasome to bind and degrade ubiquitin-conjugated proteins. Acts as a negative regulator of autophagy by mediating 'Lys-29'- and 'Lys-48'-linked ubiquitination of PIK3C3/VPS34, promoting its degradation. Can assemble unanchored poly-ubiquitin chains in either 'Lys-29'- or 'Lys-48'-linked polyubiquitin chains; with some preference for 'Lys-48' linkages. Acts as a negative regulator of type I interferon by mediating 'Lys-48'-linked ubiquitination of IRF3 and IRF7, leading to their degradation by the proteasome. Catalyzes ubiquitination and degradation of CAND2. The chain is Ubiquitin-protein ligase E3C from Homo sapiens (Human).